A 348-amino-acid polypeptide reads, in one-letter code: CCN family member 2 (348 aa).

The N-terminal stretch at 1–25 (MLASVAGPISLALVLLALCTRPAMG) is a signal peptide. The region spanning 26-97 (QDCSAQCQCA…NRKIGVCTAK (72 aa)) is the IGFBP N-terminal domain. Cystine bridges form between C28–C53, C32–C55, C34–C56, C42–C59, C67–C81, and C73–C94. Residues 100–166 (APCVFGGSVY…GKCCEEWVCD (67 aa)) form the VWFC domain. The region spanning 197-242 (NCLVQTTEWSACSKTCGMGISTRVTNDNTFCRLEKQSRLCMVRPCE) is the TSP type-1 domain. Residues 246–348 (EENIKKGKKC…YYRKMYGDMA (103 aa)) form a heparin-binding region. 5 disulfide bridges follow: C255–C292, C272–C306, C283–C322, C286–C324, and C291–C328. In terms of domain architecture, CTCK spans 255–329 (CIRTPKIAKP…KTCACHYNCP (75 aa)).

The protein belongs to the CCN family. In terms of assembly, monomer. Interacts with TSKU. In terms of tissue distribution, testis, spleen, kidney, lung, heart, and brain (lowest level in testis and highest in lung).

The protein localises to the secreted. The protein resides in the extracellular space. Its subcellular location is the extracellular matrix. Functionally, major connective tissue mitoattractant secreted by vascular endothelial cells. Promotes proliferation and differentiation of chondrocytes. Is involved in the stimulation of osteoblast differentiation and has a critical role in osteogenesis. Mediates heparin- and divalent cation-dependent cell adhesion in many cell types including fibroblasts, myofibroblasts, endothelial and epithelial cells. Enhances fibroblast growth factor-induced DNA synthesis. The chain is CCN family member 2 from Mus musculus (Mouse).